The sequence spans 30 residues: Babycurus-toxin 1 (30 aa).

An LCN-type CS-alpha/beta domain is found at Lys2–Gln30.

The protein belongs to the long (4 C-C) scorpion toxin superfamily. Sodium channel inhibitor family. In terms of tissue distribution, expressed by the venom gland.

The protein localises to the secreted. Functionally, binds to sodium channels (Nav) and inhibits both the activation and inactivation of the activated channels, thereby blocking neuronal transmission. This Babycurus centrurimorphus (East African scorpion) protein is Babycurus-toxin 1.